The primary structure comprises 145 residues: uncharacterized protein (145 aa).

Belongs to the methyltransferase superfamily.

In terms of biological role, probable methyltransferase. This is an uncharacterized protein from Schizosaccharomyces pombe (strain 972 / ATCC 24843) (Fission yeast).